A 204-amino-acid polypeptide reads, in one-letter code: Large ribosomal subunit protein uL4 (204 aa).

Residues 44 to 76 form a disordered region; it reads KRQGTQSAKTRSEVRGGGIKPWRQKGTGRARQG.

The protein belongs to the universal ribosomal protein uL4 family. In terms of assembly, part of the 50S ribosomal subunit.

Its function is as follows. One of the primary rRNA binding proteins, this protein initially binds near the 5'-end of the 23S rRNA. It is important during the early stages of 50S assembly. It makes multiple contacts with different domains of the 23S rRNA in the assembled 50S subunit and ribosome. Functionally, forms part of the polypeptide exit tunnel. The sequence is that of Large ribosomal subunit protein uL4 from Clostridium perfringens (strain ATCC 13124 / DSM 756 / JCM 1290 / NCIMB 6125 / NCTC 8237 / Type A).